The following is a 607-amino-acid chain: Chaperone protein DnaK (607 aa).

At Thr174 the chain carries Phosphothreonine; by autocatalysis. Positions 579 to 592 (AQAQAQQQAGANAG) are enriched in low complexity. Residues 579–607 (AQAQAQQQAGANAGSDKKDEDVAEAEVVD) are disordered.

This sequence belongs to the heat shock protein 70 family.

In terms of biological role, acts as a chaperone. In Fusobacterium nucleatum subsp. nucleatum (strain ATCC 25586 / DSM 15643 / BCRC 10681 / CIP 101130 / JCM 8532 / KCTC 2640 / LMG 13131 / VPI 4355), this protein is Chaperone protein DnaK.